The sequence spans 273 residues: Putative phosphoenolpyruvate synthase regulatory protein (273 aa).

153 to 160 (AVSRAGKT) is an ADP binding site.

The protein belongs to the pyruvate, phosphate/water dikinase regulatory protein family. PSRP subfamily.

It carries out the reaction [pyruvate, water dikinase] + ADP = [pyruvate, water dikinase]-phosphate + AMP + H(+). The enzyme catalyses [pyruvate, water dikinase]-phosphate + phosphate + H(+) = [pyruvate, water dikinase] + diphosphate. Functionally, bifunctional serine/threonine kinase and phosphorylase involved in the regulation of the phosphoenolpyruvate synthase (PEPS) by catalyzing its phosphorylation/dephosphorylation. The chain is Putative phosphoenolpyruvate synthase regulatory protein from Stenotrophomonas maltophilia (strain R551-3).